The primary structure comprises 164 residues: S-ribosylhomocysteine lyase (164 aa).

Residues histidine 54, histidine 58, and cysteine 128 each coordinate Fe cation.

This sequence belongs to the LuxS family. Homodimer. Requires Fe cation as cofactor.

The enzyme catalyses S-(5-deoxy-D-ribos-5-yl)-L-homocysteine = (S)-4,5-dihydroxypentane-2,3-dione + L-homocysteine. Involved in the synthesis of autoinducer 2 (AI-2) which is secreted by bacteria and is used to communicate both the cell density and the metabolic potential of the environment. The regulation of gene expression in response to changes in cell density is called quorum sensing. Catalyzes the transformation of S-ribosylhomocysteine (RHC) to homocysteine (HC) and 4,5-dihydroxy-2,3-pentadione (DPD). The polypeptide is S-ribosylhomocysteine lyase (Campylobacter jejuni subsp. jejuni serotype O:6 (strain 81116 / NCTC 11828)).